Consider the following 253-residue polypeptide: Phosphoadenosine 5'-phosphosulfate reductase (253 aa).

The active-site Nucleophile; cysteine thiosulfonate intermediate is the C239.

The protein belongs to the PAPS reductase family. CysH subfamily.

It is found in the cytoplasm. The catalysed reaction is [thioredoxin]-disulfide + sulfite + adenosine 3',5'-bisphosphate + 2 H(+) = [thioredoxin]-dithiol + 3'-phosphoadenylyl sulfate. Its pathway is sulfur metabolism; hydrogen sulfide biosynthesis; sulfite from sulfate: step 3/3. In terms of biological role, catalyzes the formation of sulfite from phosphoadenosine 5'-phosphosulfate (PAPS) using thioredoxin as an electron donor. The protein is Phosphoadenosine 5'-phosphosulfate reductase of Aliivibrio fischeri (strain ATCC 700601 / ES114) (Vibrio fischeri).